We begin with the raw amino-acid sequence, 89 residues long: Small ribosomal subunit protein uS15 (89 aa).

The protein belongs to the universal ribosomal protein uS15 family. In terms of assembly, part of the 30S ribosomal subunit. Forms a bridge to the 50S subunit in the 70S ribosome, contacting the 23S rRNA.

In terms of biological role, one of the primary rRNA binding proteins, it binds directly to 16S rRNA where it helps nucleate assembly of the platform of the 30S subunit by binding and bridging several RNA helices of the 16S rRNA. Forms an intersubunit bridge (bridge B4) with the 23S rRNA of the 50S subunit in the ribosome. This is Small ribosomal subunit protein uS15 from Pectobacterium atrosepticum (strain SCRI 1043 / ATCC BAA-672) (Erwinia carotovora subsp. atroseptica).